The sequence spans 107 residues: U1-lycotoxin-Ls1x (107 aa).

An N-terminal signal peptide occupies residues 1–20 (MMKVLVVVALLVTLISYSSS). Positions 21–41 (EGIDDLEADELLSLMANEHPR) are excised as a propeptide. 4 disulfides stabilise this stretch: C44-C59, C51-C68, C58-C86, and C70-C84.

This sequence belongs to the neurotoxin 19 (CSTX) family. 04 (U1-Lctx) subfamily. In terms of tissue distribution, expressed by the venom gland.

It localises to the secreted. The chain is U1-lycotoxin-Ls1x from Lycosa singoriensis (Wolf spider).